Here is a 430-residue protein sequence, read N- to C-terminus: Gamma-glutamyl phosphate reductase (430 aa).

This sequence belongs to the gamma-glutamyl phosphate reductase family.

The protein resides in the cytoplasm. The enzyme catalyses L-glutamate 5-semialdehyde + phosphate + NADP(+) = L-glutamyl 5-phosphate + NADPH + H(+). The protein operates within amino-acid biosynthesis; L-proline biosynthesis; L-glutamate 5-semialdehyde from L-glutamate: step 2/2. Functionally, catalyzes the NADPH-dependent reduction of L-glutamate 5-phosphate into L-glutamate 5-semialdehyde and phosphate. The product spontaneously undergoes cyclization to form 1-pyrroline-5-carboxylate. The polypeptide is Gamma-glutamyl phosphate reductase (Rhodopseudomonas palustris (strain ATCC BAA-98 / CGA009)).